A 666-amino-acid chain; its full sequence is Pantothenate kinase 1 (666 aa).

This sequence belongs to the type II pantothenate kinase family.

The enzyme catalyses (R)-pantothenate + ATP = (R)-4'-phosphopantothenate + ADP + H(+). Its pathway is cofactor biosynthesis; coenzyme A biosynthesis; CoA from (R)-pantothenate: step 1/5. Its activity is regulated as follows. Regulated by feedback inhibition by malonyl-CoA. Catalyzes the phosphorylation of pantothenate the first step in CoA biosynthesis. May play a role in the physiological regulation of the intracellular CoA concentration. This is Pantothenate kinase 1 from Oryza sativa subsp. japonica (Rice).